Consider the following 586-residue polypeptide: CTP synthase (586 aa).

An amidoligase domain region spans residues 1–278 (MRKHPQTATK…DAFVVRRLNL (278 aa)). Serine 20 serves as a coordination point for CTP. Residue serine 20 participates in UTP binding. ATP is bound by residues 21-26 (SLGKGL) and aspartate 78. Residues aspartate 78 and glutamate 152 each contribute to the Mg(2+) site. Residues 159 to 161 (DIE), 199 to 204 (KTKPTQ), and lysine 235 contribute to the CTP site. Residues 199–204 (KTKPTQ) and lysine 235 each bind UTP. The Glutamine amidotransferase type-1 domain maps to 303–551 (RIALVGKYVE…VGAAIDYKAG (249 aa)). An L-glutamine-binding site is contributed by glycine 366. Cysteine 393 serves as the catalytic Nucleophile; for glutamine hydrolysis. L-glutamine-binding positions include 394 to 397 (LGLQ), glutamate 416, and arginine 477. Active-site residues include histidine 524 and glutamate 526. Residues 560-586 (EIPEHTPNGSSHRDGVGQPLPEPASRG) form a disordered region.

This sequence belongs to the CTP synthase family. Homotetramer.

The enzyme catalyses UTP + L-glutamine + ATP + H2O = CTP + L-glutamate + ADP + phosphate + 2 H(+). It catalyses the reaction L-glutamine + H2O = L-glutamate + NH4(+). The catalysed reaction is UTP + NH4(+) + ATP = CTP + ADP + phosphate + 2 H(+). The protein operates within pyrimidine metabolism; CTP biosynthesis via de novo pathway; CTP from UDP: step 2/2. Allosterically activated by GTP, when glutamine is the substrate; GTP has no effect on the reaction when ammonia is the substrate. The allosteric effector GTP functions by stabilizing the protein conformation that binds the tetrahedral intermediate(s) formed during glutamine hydrolysis. Inhibited by the product CTP, via allosteric rather than competitive inhibition. Catalyzes the ATP-dependent amination of UTP to CTP with either L-glutamine or ammonia as the source of nitrogen. Regulates intracellular CTP levels through interactions with the four ribonucleotide triphosphates. The chain is CTP synthase from Mycobacterium tuberculosis (strain CDC 1551 / Oshkosh).